Reading from the N-terminus, the 344-residue chain is Phosphoribosylformylglycinamidine cyclo-ligase (344 aa).

It belongs to the AIR synthase family.

It localises to the cytoplasm. It carries out the reaction 2-formamido-N(1)-(5-O-phospho-beta-D-ribosyl)acetamidine + ATP = 5-amino-1-(5-phospho-beta-D-ribosyl)imidazole + ADP + phosphate + H(+). It participates in purine metabolism; IMP biosynthesis via de novo pathway; 5-amino-1-(5-phospho-D-ribosyl)imidazole from N(2)-formyl-N(1)-(5-phospho-D-ribosyl)glycinamide: step 2/2. In Anaeromyxobacter sp. (strain Fw109-5), this protein is Phosphoribosylformylglycinamidine cyclo-ligase.